Reading from the N-terminus, the 344-residue chain is MKERLHELEREALEKIEQAGDLKALNDVRVAYLGKKGPITEVLRGMGALPPEERPKIGALANEVREAIQKALEAKQTKLEEEEVERKLAAEAIDVTLPGRPVKLGNPHPLTRVIEEIEDLFIGMGYTVAEGPEVETDYYNFEALNLPKGHPARDMQDSFYITEEILLRTHTSPMQARTMEKHRGRGPVKIICPGKVYRRDTDDATHSHQFTQIEGLVVDRNIRMSDLKGTLREFARKLFGEGRDIRFRPSFFPFTEPSVEVDVSCFRCEGHGCSVCKGTGWIEILGAGMVHPNVLEMAGFDSKTYTGFAFGMGPERIAMLKYGIDDIRHFYQNDLRFLQQFLRV.

Glutamate 256 lines the Mg(2+) pocket.

The protein belongs to the class-II aminoacyl-tRNA synthetase family. Phe-tRNA synthetase alpha subunit type 1 subfamily. In terms of assembly, tetramer of two alpha and two beta subunits. Mg(2+) serves as cofactor.

The protein localises to the cytoplasm. The catalysed reaction is tRNA(Phe) + L-phenylalanine + ATP = L-phenylalanyl-tRNA(Phe) + AMP + diphosphate + H(+). This is Phenylalanine--tRNA ligase alpha subunit from Geobacillus thermodenitrificans (strain NG80-2).